We begin with the raw amino-acid sequence, 145 residues long: Superoxide dismutase [Mn/Fe] (145 aa).

Fe(3+) contacts are provided by His10 and His64. Positions 10 and 64 each coordinate Mn(2+).

It belongs to the iron/manganese superoxide dismutase family. Mn(2+) is required as a cofactor. The cofactor is Fe(3+).

The catalysed reaction is 2 superoxide + 2 H(+) = H2O2 + O2. Destroys superoxide anion radicals which are normally produced within the cells and which are toxic to biological systems. Catalyzes the dismutation of superoxide anion radicals into O2 and H2O2 by successive reduction and oxidation of the transition metal ion at the active site. This Streptococcus salivarius protein is Superoxide dismutase [Mn/Fe] (sodA).